The chain runs to 120 residues: MTKFVRKYMFCLVLVFAACSLVVNSIRTPPLKNTVNGGEKKNADIEQAQTHHKKEISKNGGVEMEMYPTGSSLPDCSYACGACSPCKRVMISFECSVAESCSVIYRCTCRGRYYHVPSRA.

Residues 1-25 (MTKFVRKYMFCLVLVFAACSLVVNS) form the signal peptide. 4 disulfide bridges follow: Cys-76–Cys-107, Cys-80–Cys-86, Cys-83–Cys-109, and Cys-95–Cys-101.

Belongs to the plant cysteine rich small secretory peptide family. Epidermal patterning factor subfamily. In terms of assembly, interacts with ERECTA, ERL1 and TMM. Expressed in leaves, especially by the MMCs and their early descendants cells (stomatal lineage cells) including guard mother cells (GMCs).

Its subcellular location is the secreted. Its function is as follows. Controls stomatal patterning. Regulates the number of cells that enter, and remain in, the stomatal lineage by inhibiting protodermal cells from adopting the meristemoid mother cell (MMC) fate in a non-cell-autonomous manner. Mediates stomatal development inhibition. MEPF2: mobile signal controlling stomatal development in a non-cell-autonomous manner. Uses ERECTA as major receptor. Inactivated by cleavage by CRSP (AC Q9LNU1). May act by competing with somatogen (AC Q9SV72) for the same receptor, TMM (AC Q9SSD1). This Arabidopsis thaliana (Mouse-ear cress) protein is Protein EPIDERMAL PATTERNING FACTOR 2.